The following is a 358-amino-acid chain: uncharacterized protein (358 aa).

The tract at residues 324–358 (DMEVEETPPTTNKDLPRGATQPKRNSIKRVSKLID) is disordered. Positions 348–358 (NSIKRVSKLID) are enriched in basic residues.

This is an uncharacterized protein from Mycoplasma pneumoniae (strain ATCC 29342 / M129 / Subtype 1) (Mycoplasmoides pneumoniae).